The primary structure comprises 274 residues: Large ribosomal subunit protein uL2cz/uL2cy (274 aa).

The segment at 224-274 (NPVDHPHGGGEGRAPIGRKKPATPWGYPALGRRSRKRNKYSDNLILRRRSK) is disordered.

Belongs to the universal ribosomal protein uL2 family. As to quaternary structure, part of the 50S ribosomal subunit.

It is found in the plastid. The protein localises to the chloroplast. The protein is Large ribosomal subunit protein uL2cz/uL2cy (rpl2-A) of Morus indica (Mulberry).